The following is a 609-amino-acid chain: Membrane protein insertase YidC (609 aa).

The chain crosses the membrane as a helical span at residues 9–29 (IIAIVLSGLILIAWQYFYNIP). The tract at residues 35–63 (RAAQQAQSQTAKSPTEPTPNSPKPDHPAA) is disordered. A run of 4 helical transmembrane segments spans residues 375 to 395 (VFGNFGIAILFVTVLIKAIFF), 449 to 469 (LPMVLQIPVFFSLYKVLFVTI), 507 to 527 (LLGPYLAIGAWPIIMGITMWF), and 546 to 566 (WMPVIFTFMLAAFPAGLVIYW).

The protein belongs to the OXA1/ALB3/YidC family. Type 1 subfamily. Interacts with the Sec translocase complex via SecD. Specifically interacts with transmembrane segments of nascent integral membrane proteins during membrane integration.

The protein resides in the cell inner membrane. In terms of biological role, required for the insertion and/or proper folding and/or complex formation of integral membrane proteins into the membrane. Involved in integration of membrane proteins that insert both dependently and independently of the Sec translocase complex, as well as at least some lipoproteins. Aids folding of multispanning membrane proteins. The sequence is that of Membrane protein insertase YidC from Nitrobacter hamburgensis (strain DSM 10229 / NCIMB 13809 / X14).